A 134-amino-acid polypeptide reads, in one-letter code: Putative esterase PA0474 (134 aa).

This sequence belongs to the thioesterase PaaI family.

The chain is Putative esterase PA0474 from Pseudomonas aeruginosa (strain ATCC 15692 / DSM 22644 / CIP 104116 / JCM 14847 / LMG 12228 / 1C / PRS 101 / PAO1).